A 135-amino-acid chain; its full sequence is Protein PsiE homolog (135 aa).

Transmembrane regions (helical) follow at residues 20 to 40 (VGLIMLAAILVVFLVKETIHL), 54 to 74 (YMLIEGIVIYFLYFEFIALIV), 82 to 102 (HFPLRYFIYIGITAIIRLIIV), and 107 to 127 (PIDTLIYSGSILVLVVTLYLA).

It belongs to the PsiE family.

The protein resides in the cell inner membrane. This chain is Protein PsiE homolog, found in Yersinia pestis (strain Pestoides F).